A 237-amino-acid chain; its full sequence is Nodulation protein NolA (237 aa).

One can recognise an HTH merR-type domain in the interval 10–79; it reads RWRIGELAGA…LQEIRRAMDG (70 aa). Positions 13-32 form a DNA-binding region, H-T-H motif; the sequence is IGELAGATGVTVRTLHHYEH.

In terms of biological role, involved in genotype-specific nodulation of soybeans. In Bradyrhizobium sp. (strain NC92), this protein is Nodulation protein NolA (nolA).